The primary structure comprises 161 residues: Regulator of ribonuclease activity A (161 aa).

This sequence belongs to the RraA family. As to quaternary structure, homotrimer. Binds to both RNA-binding sites in the C-terminal region of Rne and to RhlB.

It is found in the cytoplasm. Globally modulates RNA abundance by binding to RNase E (Rne) and regulating its endonucleolytic activity. Can modulate Rne action in a substrate-dependent manner by altering the composition of the degradosome. Modulates RNA-binding and helicase activities of the degradosome. This is Regulator of ribonuclease activity A from Idiomarina loihiensis (strain ATCC BAA-735 / DSM 15497 / L2-TR).